Consider the following 37-residue polypeptide: Turripeptide Lol6.2 (37 aa).

Disulfide bonds link Cys4/Cys16, Cys8/Cys21, and Cys15/Cys29.

In terms of tissue distribution, expressed by the venom duct.

Its subcellular location is the secreted. Its function is as follows. Acts as a neurotoxin by inhibiting an ion channel. The protein is Turripeptide Lol6.2 of Iotyrris olangoensis (Sea snail).